Consider the following 324-residue polypeptide: D-alanine--D-alanine ligase (324 aa).

An ATP-grasp domain is found at 121-321 (NQYLKAFGVR…IKDVMTDIIE (201 aa)). Residue 149–204 (VEKIGLPCFIKPNLGGSSFGVTKVKTREQIQPAIAKAFSEAEEVMIEAFMGGTELT) coordinates ATP. Mg(2+)-binding residues include D275, E288, and N290.

This sequence belongs to the D-alanine--D-alanine ligase family. Requires Mg(2+) as cofactor. Mn(2+) serves as cofactor.

It is found in the cytoplasm. The catalysed reaction is 2 D-alanine + ATP = D-alanyl-D-alanine + ADP + phosphate + H(+). Its pathway is cell wall biogenesis; peptidoglycan biosynthesis. Its function is as follows. Cell wall formation. This Bacteroides fragilis (strain ATCC 25285 / DSM 2151 / CCUG 4856 / JCM 11019 / LMG 10263 / NCTC 9343 / Onslow / VPI 2553 / EN-2) protein is D-alanine--D-alanine ligase.